Reading from the N-terminus, the 399-residue chain is Ankyrin repeat domain-containing protein 65 (399 aa).

10 ANK repeats span residues 40–69 (QGWGHLLQAVWRGPAGLVTQLLRQGASVEE), 73–102 (AGRTPLHLAVLRGHAPLVRLLLQRGAPVGA), 106–135 (AGRTALHEAAWHGHSRVAELLLQRGASAAA), 139–168 (TGLTPLHWAAALGHTLLAARLLEAPGPGPA), 176–205 (RGWTAAHWAAAGGRLAVLELLAAGGAGLDG), 207–231 (LLVAAAAGRGAALRFLLARGARVDA), 235–264 (AGATALGLAAALGRSQDIEVLLGHGADPGI), 268–297 (HGRSALHRAAARGHLLAVQLLVTQGAEVDA), 301–330 (LGLTPLHHASREGHVEVAGCLLDRGAQVDA), and 334–363 (LRKTPLHLAAERGHGPTVGLLLSRGASPTL). Residues 377–399 (DLPQALPELGGGEKECEGIESTG) are disordered.

This chain is Ankyrin repeat domain-containing protein 65 (ANKRD65), found in Homo sapiens (Human).